Reading from the N-terminus, the 446-residue chain is Glutamate-1-semialdehyde 2,1-aminomutase (446 aa).

Position 264 is an N6-(pyridoxal phosphate)lysine (Lys264).

This sequence belongs to the class-III pyridoxal-phosphate-dependent aminotransferase family. HemL subfamily. Pyridoxal 5'-phosphate is required as a cofactor.

Its subcellular location is the cytoplasm. The enzyme catalyses (S)-4-amino-5-oxopentanoate = 5-aminolevulinate. Its pathway is porphyrin-containing compound metabolism; protoporphyrin-IX biosynthesis; 5-aminolevulinate from L-glutamyl-tRNA(Glu): step 2/2. The chain is Glutamate-1-semialdehyde 2,1-aminomutase from Natronomonas pharaonis (strain ATCC 35678 / DSM 2160 / CIP 103997 / JCM 8858 / NBRC 14720 / NCIMB 2260 / Gabara) (Halobacterium pharaonis).